A 165-amino-acid chain; its full sequence is Putative 4-hydroxy-4-methyl-2-oxoglutarate aldolase (165 aa).

Residues 80-83 (GGNL) and R102 contribute to the substrate site. Residue D103 participates in a divalent metal cation binding.

Belongs to the class II aldolase/RraA-like family. Homotrimer. Requires a divalent metal cation as cofactor.

It carries out the reaction 4-hydroxy-4-methyl-2-oxoglutarate = 2 pyruvate. The catalysed reaction is oxaloacetate + H(+) = pyruvate + CO2. Catalyzes the aldol cleavage of 4-hydroxy-4-methyl-2-oxoglutarate (HMG) into 2 molecules of pyruvate. Also contains a secondary oxaloacetate (OAA) decarboxylase activity due to the common pyruvate enolate transition state formed following C-C bond cleavage in the retro-aldol and decarboxylation reactions. The protein is Putative 4-hydroxy-4-methyl-2-oxoglutarate aldolase of Cupriavidus necator (strain ATCC 17699 / DSM 428 / KCTC 22496 / NCIMB 10442 / H16 / Stanier 337) (Ralstonia eutropha).